Here is a 1159-residue protein sequence, read N- to C-terminus: Phosphatidylinositol 3-kinase age-1 (1159 aa).

A compositionally biased stretch (polar residues) spans 1–25; the sequence is MSMGRSSSTTFRNRTASHGSRSLGS. Positions 1–28 are disordered; the sequence is MSMGRSSSTTFRNRTASHGSRSLGSAET. The PI3K-ABD domain occupies 79–179; it reads SEGVADMIVL…FPMLFLFEPD (101 aa). The PI3K-RBD domain occupies 272 to 363; that stretch reads RKSEANEVWE…YRCPGFVVRR (92 aa). The C2 PI3K-type domain maps to 430 to 588; sequence LDSNLMIRPV…VKMPNEAQYK (159 aa). In terms of domain architecture, PIK helical spans 607-793; it reads DYEACIGDPG…SLLMEAYLRG (187 aa). The 302-residue stretch at 858–1159 folds into the PI3K/PI4K catalytic domain; it reads VIEKAIVLGS…NWLFHAMKHY (302 aa). The segment at 864–870 is G-loop; it reads VLGSAKQ. The interval 1028–1036 is catalytic loop; it reads GIKDRHSDN. The segment at 1047–1073 is activation loop; that stretch reads HIDFGHILGHGKTKLGIQRDRQPFILT.

Belongs to the PI3/PI4-kinase family.

It carries out the reaction a 1,2-diacyl-sn-glycero-3-phospho-(1D-myo-inositol) + ATP = a 1,2-diacyl-sn-glycero-3-phospho-(1D-myo-inositol-3-phosphate) + ADP + H(+). Its function is as follows. Phosphatidylinositol 3-kinase homolog that regulates longevity and diapause. Promotes cell survival during embryonic development by recruiting akt-1/2 to the plasma membrane through the production of PtdIns(3,4,5)P3. Could function in the development or neuroendocrine signaling of the dauer pathway. Mediates susceptibility to enteropathogenic E.coli infection. May negatively regulate AYI interneuron neurite outgrowth. Plays a role in aversive olfactory learning when an odor is associated with food deprivation. Regulates this process by promoting the nuclear relocalization of egl-4 in AWC olfactory neurons after odor conditioning. The polypeptide is Phosphatidylinositol 3-kinase age-1 (age-1) (Caenorhabditis briggsae).